Consider the following 262-residue polypeptide: Phosphomannomutase 1 (262 aa).

Residue A2 is modified to N-acetylalanine. The active-site Nucleophile is D19. Mg(2+)-binding residues include D19 and D21. Catalysis depends on D21, which acts as the Proton donor/acceptor. Residues R28, R132, R143, R150, M186, S188, and D190 each coordinate alpha-D-mannose 1-phosphate. Mg(2+) contacts are provided by N218, Y230, D232, and T235. S242 carries the post-translational modification Phosphoserine.

It belongs to the eukaryotic PMM family. In terms of assembly, homodimer. Mg(2+) serves as cofactor. Present in brain, where it is restricted to neuronal cell bodies. Present at lower levels in pancreas, liver, lung, gonads, uterus, adrenal glands and pituitary (at protein level). Undetectable in intestine.

Its subcellular location is the cytoplasm. The enzyme catalyses alpha-D-mannose 1-phosphate = D-mannose 6-phosphate. Its pathway is nucleotide-sugar biosynthesis; GDP-alpha-D-mannose biosynthesis; alpha-D-mannose 1-phosphate from D-fructose 6-phosphate: step 2/2. With respect to regulation, IMP, a metabolite whose concentration is elevated in anoxia, inhibits phosphomannomutase and phosphoglucomutase activities and strongly enhances glucose-1,6-bisphosphatase activity. Functionally, involved in the synthesis of the GDP-mannose and dolichol-phosphate-mannose required for a number of critical mannosyl transfer reactions. In addition, may be responsible for the degradation of glucose-1,6-bisphosphate in ischemic brain. The polypeptide is Phosphomannomutase 1 (Pmm1) (Mus musculus (Mouse)).